The sequence spans 129 residues: Small ribosomal subunit protein uS11 (129 aa).

Belongs to the universal ribosomal protein uS11 family. In terms of assembly, part of the 30S ribosomal subunit. Interacts with proteins S7 and S18. Binds to IF-3.

Its function is as follows. Located on the platform of the 30S subunit, it bridges several disparate RNA helices of the 16S rRNA. Forms part of the Shine-Dalgarno cleft in the 70S ribosome. This Mycoplasma mycoides subsp. mycoides SC (strain CCUG 32753 / NCTC 10114 / PG1) protein is Small ribosomal subunit protein uS11.